Consider the following 415-residue polypeptide: Elongation factor Tu, chloroplastic (415 aa).

In terms of domain architecture, tr-type G spans Lys13–Arg217. A G1 region spans residues Gly22 to Thr29. Gly22–Thr29 serves as a coordination point for GTP. Thr29 contributes to the Mg(2+) binding site. Positions Asn63–Tyr67 are G2. The interval Asp84 to Gly87 is G3. GTP is bound by residues Asp84–His88 and Asn139–Asp142. Residues Asn139–Asp142 are G4. Residues Ser177–Leu179 form a G5 region.

This sequence belongs to the TRAFAC class translation factor GTPase superfamily. Classic translation factor GTPase family. EF-Tu/EF-1A subfamily.

The protein localises to the plastid. Its subcellular location is the chloroplast. It catalyses the reaction GTP + H2O = GDP + phosphate + H(+). In terms of biological role, GTP hydrolase that promotes the GTP-dependent binding of aminoacyl-tRNA to the A-site of ribosomes during protein biosynthesis. The chain is Elongation factor Tu, chloroplastic (tufA) from Coleochaete orbicularis (Charophycean green alga).